Reading from the N-terminus, the 115-residue chain is MNETLLKCTTRHVRIFTARVENNDLVPDPNQLTLDLDPDNEFLWTESVTKEIQQRFAELVASHAGGELSDYNLRRIGSELEGTIRKLLQAGKLSYNPECRVLNYSMGLPRTPELL.

The protein belongs to the complex I NdhM subunit family. In terms of assembly, NDH-1 can be composed of about 15 different subunits; different subcomplexes with different compositions have been identified which probably have different functions.

It localises to the cellular thylakoid membrane. It catalyses the reaction a plastoquinone + NADH + (n+1) H(+)(in) = a plastoquinol + NAD(+) + n H(+)(out). The catalysed reaction is a plastoquinone + NADPH + (n+1) H(+)(in) = a plastoquinol + NADP(+) + n H(+)(out). Its function is as follows. NDH-1 shuttles electrons from an unknown electron donor, via FMN and iron-sulfur (Fe-S) centers, to quinones in the respiratory and/or the photosynthetic chain. The immediate electron acceptor for the enzyme in this species is believed to be plastoquinone. Couples the redox reaction to proton translocation, and thus conserves the redox energy in a proton gradient. Cyanobacterial NDH-1 also plays a role in inorganic carbon-concentration. In Prochlorococcus marinus (strain MIT 9313), this protein is NAD(P)H-quinone oxidoreductase subunit M.